The primary structure comprises 447 residues: D-ribitol-5-phosphate cytidylyltransferase (447 aa).

This sequence belongs to the IspD/TarI cytidylyltransferase family. IspD subfamily. Homodimer.

It is found in the cytoplasm. Its subcellular location is the cytosol. The catalysed reaction is D-ribitol 5-phosphate + CTP + H(+) = CDP-L-ribitol + diphosphate. It catalyses the reaction D-ribose 5-phosphate + CTP + H(+) = CDP-D-ribose + diphosphate. The enzyme catalyses D-ribulose 5-phosphate + CTP + H(+) = CDP-D-ribulose + diphosphate. It functions in the pathway protein modification; protein glycosylation. Its function is as follows. Cytidylyltransferase required for protein O-linked mannosylation. Catalyzes the formation of CDP-ribitol nucleotide sugar from D-ribitol 5-phosphate. CDP-ribitol is a substrate of FKTN during the biosynthesis of the phosphorylated O-mannosyl trisaccharide (N-acetylgalactosamine-beta-3-N-acetylglucosamine-beta-4-(phosphate-6-)mannose), a carbohydrate structure present in alpha-dystroglycan (DAG1), which is required for binding laminin G-like domain-containing extracellular proteins with high affinity. Shows activity toward other pentose phosphate sugars and mediates formation of CDP-ribulose or CDP-ribose using CTP and ribulose-5-phosphate or ribose-5-phosphate, respectively. Not involved in dolichol production. This chain is D-ribitol-5-phosphate cytidylyltransferase (Crppa), found in Mus musculus (Mouse).